The following is a 423-amino-acid chain: Serine--tRNA ligase (423 aa).

An L-serine-binding site is contributed by 229–231 (TAE). 258–260 (RRE) lines the ATP pocket. Glu-281 contributes to the L-serine binding site. 345 to 348 (EISS) is a binding site for ATP. Ser-379 lines the L-serine pocket.

This sequence belongs to the class-II aminoacyl-tRNA synthetase family. Type-1 seryl-tRNA synthetase subfamily. In terms of assembly, homodimer. The tRNA molecule binds across the dimer.

It localises to the cytoplasm. The catalysed reaction is tRNA(Ser) + L-serine + ATP = L-seryl-tRNA(Ser) + AMP + diphosphate + H(+). The enzyme catalyses tRNA(Sec) + L-serine + ATP = L-seryl-tRNA(Sec) + AMP + diphosphate + H(+). The protein operates within aminoacyl-tRNA biosynthesis; selenocysteinyl-tRNA(Sec) biosynthesis; L-seryl-tRNA(Sec) from L-serine and tRNA(Sec): step 1/1. Its function is as follows. Catalyzes the attachment of serine to tRNA(Ser). Is also able to aminoacylate tRNA(Sec) with serine, to form the misacylated tRNA L-seryl-tRNA(Sec), which will be further converted into selenocysteinyl-tRNA(Sec). The protein is Serine--tRNA ligase (serS1) of Methanosarcina barkeri (strain Fusaro / DSM 804).